The chain runs to 435 residues: MNAFTPREIVSELDRHIVGQKDAKRAVAIALRNRWRRQQLSEALRDEVLPKNILMIGPTGVGKTEIARRLAKLAQAPFLKVEATKFTEVGYVGRDVESIIRDLVETALTQERDRLRKQVNAKAEANAEERVLDALVGDRASPETRQKFRKMLREGQINDKEIEVQVQDSGGALPTMDIPGMPGAQMGMLNLNDIFGKAFGNRTKARKMTVEDSHAVLVREEADKLLDEEQVVKAAIAAVENNGIVFLDEIDKIATASERRGGDVSREGVQRDLLPLIEGTTVSTKYGPVKTDHVLFIASGAFHTAKPADLLPELQGRLPIRVELSALNAGDFKRILLEPEASLITQYKALLATEGVTLEFPDDTVEAIAEIATEINGSVENIGARRLHTVLERLLEEISFTATDRSGETIVVTRDMVKERVGALAAKADLSRFIL.

ATP contacts are provided by residues V18, 60–65 (GVGKTE), D248, E313, and R385.

Belongs to the ClpX chaperone family. HslU subfamily. A double ring-shaped homohexamer of HslV is capped on each side by a ring-shaped HslU homohexamer. The assembly of the HslU/HslV complex is dependent on binding of ATP.

It is found in the cytoplasm. Its function is as follows. ATPase subunit of a proteasome-like degradation complex; this subunit has chaperone activity. The binding of ATP and its subsequent hydrolysis by HslU are essential for unfolding of protein substrates subsequently hydrolyzed by HslV. HslU recognizes the N-terminal part of its protein substrates and unfolds these before they are guided to HslV for hydrolysis. This chain is ATP-dependent protease ATPase subunit HslU, found in Rhodospirillum rubrum (strain ATCC 11170 / ATH 1.1.1 / DSM 467 / LMG 4362 / NCIMB 8255 / S1).